A 198-amino-acid polypeptide reads, in one-letter code: MEHYLSLFVKSVFIENMALSFFLGMCTFLAVSKKVSTAFGLGIAVIVVLGIAVPANQLVYTHVLKDGALVEGVDLSFLNFITFIGVIAALVQILEMILDKFFPALYSALGIFLPLITVNCAIFGGVSFMVQREYNFTESVVYGLGAGTGWMLAIVALAGLTEKMKYSDVPAGLRGLGITFITVGLMALGFMSFSGIQL.

The next 6 membrane-spanning stretches (helical) occupy residues 11–31, 35–55, 77–97, 110–130, 140–160, and 176–196; these read SVFIENMALSFFLGMCTFLAV, VSTAFGLGIAVIVVLGIAVPA, FLNFITFIGVIAALVQILEMI, GIFLPLITVNCAIFGGVSFMV, VVYGLGAGTGWMLAIVALAGL, and LGITFITVGLMALGFMSFSGI.

It belongs to the NqrDE/RnfAE family. As to quaternary structure, composed of six subunits; NqrA, NqrB, NqrC, NqrD, NqrE and NqrF.

The protein localises to the cell inner membrane. It catalyses the reaction a ubiquinone + n Na(+)(in) + NADH + H(+) = a ubiquinol + n Na(+)(out) + NAD(+). Its function is as follows. NQR complex catalyzes the reduction of ubiquinone-1 to ubiquinol by two successive reactions, coupled with the transport of Na(+) ions from the cytoplasm to the periplasm. NqrA to NqrE are probably involved in the second step, the conversion of ubisemiquinone to ubiquinol. The protein is Na(+)-translocating NADH-quinone reductase subunit E of Actinobacillus pleuropneumoniae serotype 5b (strain L20).